Consider the following 92-residue polypeptide: DNA/RNA-binding protein Alba (92 aa).

Lysine 11 bears the N6-acetyllysine mark.

It belongs to the histone-like Alba family. In terms of processing, acetylated. Acetylation at Lys-11 decreases DNA-binding affinity.

The protein resides in the cytoplasm. It is found in the chromosome. Its function is as follows. Binds double-stranded DNA tightly but without sequence specificity. Involved in DNA compaction. In Pyrobaculum aerophilum (strain ATCC 51768 / DSM 7523 / JCM 9630 / CIP 104966 / NBRC 100827 / IM2), this protein is DNA/RNA-binding protein Alba.